The sequence spans 20 residues: Basic phospholipase A2 cannitoxin alpha chain (20 aa).

In terms of assembly, heterotrimer of alpha, beta, and gamma chains; non-covalently linked. The cofactor is Ca(2+). In terms of tissue distribution, expressed by the venom gland.

Its subcellular location is the secreted. It catalyses the reaction a 1,2-diacyl-sn-glycero-3-phosphocholine + H2O = a 1-acyl-sn-glycero-3-phosphocholine + a fatty acid + H(+). Its function is as follows. Heterotrimer: Snake venom phospholipase A2 (PLA2) heterotrimer that acts as a potent presynaptic neurotoxin by blocking synaptic transmission and synaptic vesicle recycling. Enzymatic activity is essential for the neurotoxic effects. May act by binding in a calcium-dependent fashion to neurotonal pentraxin-1 (NPTX1) and neurotonal pentraxin-2 (NPTX2), but not to neuronal pentraxin receptor (NPTXR). Also binds to taipoxin-associated calcium binding protein 49 (RCN2), a protein localized in the lumen of endoplasmic reticulum. Monomer (alpha chain): Snake venom phospholipase A2 (PLA2) that possesses a low level of presynaptic activity and the same high enzymatic activity than the heterotrimer. PLA2 catalyzes the calcium-dependent hydrolysis of the 2-acyl groups in 3-sn-phosphoglycerides. The chain is Basic phospholipase A2 cannitoxin alpha chain from Oxyuranus scutellatus canni (Papuan taipan).